The chain runs to 371 residues: MTTRRTGRAEKTLRETTAMPTADHRAAPGITLACALEEWAGEDARRRDVAATLNALAAGTIQIARAIAEGPLAGDLARTLSSGEAGEGQKALDIISNDMVIDALRKAPVAAVASEENDAPVLLDPEAPLLVAIDPLDGSSNIDTDISVGTIFAVFPHQDGTDAASVTAFLQNGRDMLAGGYVIYGPHTALMLTVGAGTWHFALDRDGSFRLVNAAVRVKEDAAEFAINMSNYHHWDDPIRAYVDDCLAGRKGPREREFNMRWVASMVADAHRIFQRGGIYLYPGDGRKGYTHGRLRLLYEAFPVAFLMEQAQGSAIDGRSSILDLSATGVHQRVPFIFGSRDEVARAARYHLEPSGHGERSPLFARRGLFI.

Residues Glu-115, Asp-134, Leu-136, and Asp-137 each contribute to the Mg(2+) site. Substrate-binding positions include Asp-137 to Ser-140, Asn-228, and Tyr-280 to Tyr-282. Position 300 (Glu-300) interacts with Mg(2+).

Belongs to the FBPase class 1 family. Homotetramer. Mg(2+) is required as a cofactor.

The protein resides in the cytoplasm. The enzyme catalyses beta-D-fructose 1,6-bisphosphate + H2O = beta-D-fructose 6-phosphate + phosphate. It participates in carbohydrate biosynthesis; gluconeogenesis. The chain is Fructose-1,6-bisphosphatase class 1 1 from Xanthobacter autotrophicus (strain ATCC BAA-1158 / Py2).